A 161-amino-acid polypeptide reads, in one-letter code: Peroxynitrite isomerase 2 (161 aa).

Residues 17–23 carry the GXWXGXG motif; the sequence is GTWAGQG. Histidine 152 is a heme b binding site.

This sequence belongs to the nitrobindin family. In terms of assembly, homodimer. Requires heme b as cofactor.

The catalysed reaction is peroxynitrite = nitrate. It participates in nitrogen metabolism. Its function is as follows. Heme-binding protein able to scavenge peroxynitrite and to protect free L-tyrosine against peroxynitrite-mediated nitration, by acting as a peroxynitrite isomerase that converts peroxynitrite to nitrate. Therefore, this protein likely plays a role in peroxynitrite sensing and in the detoxification of reactive nitrogen and oxygen species (RNS and ROS, respectively). Is able to bind nitric oxide (NO) in vitro, but may act as a sensor of peroxynitrite levels in vivo. The protein is Peroxynitrite isomerase 2 of Mycobacterium marinum (strain ATCC BAA-535 / M).